The chain runs to 247 residues: Probable transcriptional regulatory protein LPC_0711 (247 aa).

The protein belongs to the TACO1 family.

The protein resides in the cytoplasm. The protein is Probable transcriptional regulatory protein LPC_0711 of Legionella pneumophila (strain Corby).